A 253-amino-acid polypeptide reads, in one-letter code: Ribonuclease HII (253 aa).

The RNase H type-2 domain maps to 70–253; sequence NLIAGIDEVG…KSFEPIKSML (184 aa). A divalent metal cation-binding residues include D76, E77, and D168.

Belongs to the RNase HII family. Requires Mn(2+) as cofactor. The cofactor is Mg(2+).

It localises to the cytoplasm. The enzyme catalyses Endonucleolytic cleavage to 5'-phosphomonoester.. In terms of biological role, endonuclease that specifically degrades the RNA of RNA-DNA hybrids. This Streptococcus agalactiae serotype III (strain NEM316) protein is Ribonuclease HII.